The chain runs to 383 residues: Cytochrome b (383 aa).

Transmembrane regions (helical) follow at residues Phe-31–Met-51, Trp-75–Phe-97, Leu-112–Val-132, and Phe-178–Ile-198. Heme b is bound by residues His-81 and His-95. Heme b-binding residues include His-182 and His-196. His-201 contributes to the a ubiquinone binding site. Helical transmembrane passes span Phe-224–Phe-244, Ile-288–Asn-308, Ile-320–Gln-340, and Tyr-347–Pro-367.

Belongs to the cytochrome b family. As to quaternary structure, fungal cytochrome b-c1 complex contains 10 subunits; 3 respiratory subunits, 2 core proteins and 5 low-molecular weight proteins. Cytochrome b-c1 complex is a homodimer. Requires heme b as cofactor.

It is found in the mitochondrion inner membrane. Its function is as follows. Component of the ubiquinol-cytochrome c reductase complex (complex III or cytochrome b-c1 complex) that is part of the mitochondrial respiratory chain. The b-c1 complex mediates electron transfer from ubiquinol to cytochrome c. Contributes to the generation of a proton gradient across the mitochondrial membrane that is then used for ATP synthesis. In Phytophthora megasperma (Potato pink rot fungus), this protein is Cytochrome b (cob).